A 1013-amino-acid chain; its full sequence is Receptor-type tyrosine-protein phosphatase N2 (1013 aa).

Positions 1 to 19 (MALPLLLLLLLLLPPRVLP) are cleaved as a signal peptide. The tract at residues 1–419 (MALPLLLLLL…PGALPFAKPL (419 aa)) is involved in localization to secretory granules; interaction with CPE. The Extracellular portion of the chain corresponds to 20-613 (AAPSSVPHGR…QAEQEDSTKF (594 aa)). Disordered stretches follow at residues 116 to 137 (RHPEASGPARPSKHSIGSERRY), 273 to 302 (MPRPLLSPAVPQKWPSPLGDPEDPPSTGEG), 342 to 382 (DHRG…VQDD), and 401 to 487 (LQDH…SLPA). The span at 419 to 430 (LKMERKKSERPE) shows a compositional bias: basic and acidic residues. A phosphoserine mark is found at Ser434 and Ser435. Asn562 carries an N-linked (GlcNAc...) asparagine glycan. A helical membrane pass occupies residues 614–634 (IALTLVSLACILGVLLASGLI). Topologically, residues 635 to 1013 (YCLRHSSQHR…VNAILKALPQ (379 aa)) are cytoplasmic. The short motif at 664-673 (YQELCRQRMA) is the Tyrosine-based internalization motif element. A disordered region spans residues 673–717 (ATRPPDRPEGPHTSRISSVSSQFSDGPMPSPSARSSASSWSEEPV). Residues 686 to 696 (SRISSVSSQFS) show a composition bias toward polar residues. Phosphoserine occurs at positions 690 and 696. A compositionally biased stretch (low complexity) spans 703–717 (PSARSSASSWSEEPV). Positions 743–1003 (LEKEWEALCA…EFALTAVAEE (261 aa)) constitute a Tyrosine-protein phosphatase domain. Residues Asp911 and 943–949 (CSDGAGR) each bind substrate. The active-site Phosphocysteine intermediate is Cys943. N6-acetyllysine is present on Lys968. A substrate-binding site is contributed by Gln988. The Leucine-based sorting signal signature appears at 1002 to 1008 (EEVNAIL).

Belongs to the protein-tyrosine phosphatase family. Receptor class 8 subfamily. In terms of assembly, self-associates. Interacts (via cytoplasmic domain) with PTPRN (via cytoplasmic domain). Interacts (precursor form) with CPE. Interacts with HAP1. Interacts with AP2A1 or AP2A2 and AP1G1; indicative for an association with adaptor protein complex 2 (AP-2) and adaptor protein complex 1 (AP-1). Interacts with AP2M1; indicative for an association with adaptor protein complex 2 (AP-2). Interacts with MYO5A. Subject to proteolytic cleavage at multiple sites. Detected in pancreatic islets and adrenal medulla.

Its subcellular location is the cytoplasmic vesicle. It localises to the secretory vesicle membrane. The protein localises to the secretory vesicle. The protein resides in the synaptic vesicle membrane. The enzyme catalyses O-phospho-L-tyrosyl-[protein] + H2O = L-tyrosyl-[protein] + phosphate. Functionally, plays a role in vesicle-mediated secretory processes. Required for normal accumulation of secretory vesicles in hippocampus, pituitary and pancreatic islets. Required for the accumulation of normal levels of insulin-containing vesicles and preventing their degradation. Plays a role in insulin secretion in response to glucose stimuli. Required for normal accumulation of the neurotransmitters norepinephrine, dopamine and serotonin in the brain. In females, but not in males, required for normal accumulation and secretion of pituitary hormones, such as luteinizing hormone (LH) and follicle-stimulating hormone (FSH). Required to maintain normal levels of renin expression and renin release. May regulate catalytic active protein-tyrosine phosphatases such as PTPRA through dimerization. Has phosphatidylinositol phosphatase activity; the PIPase activity is involved in its ability to regulate insulin secretion. Can dephosphorylate phosphatidylinositol 4,5-biphosphate, phosphatidylinositol 5-phosphate and phosphatidylinositol 3-phosphate. Regulates PI(4,5)P2 level in the plasma membrane and localization of cofilin at the plasma membrane and thus is indirectly involved in regulation of actin dynamics related to cell migration and metastasis; upon hydrolysis of PI(4,5)P2 cofilin is released from the plasma membrane and acts in the cytoplasm in severing F-actin filaments. This is Receptor-type tyrosine-protein phosphatase N2 (PTPRN2) from Macaca nemestrina (Pig-tailed macaque).